The primary structure comprises 612 residues: Glutamine--fructose-6-phosphate aminotransferase [isomerizing] (612 aa).

Residue cysteine 2 is the Nucleophile; for GATase activity of the active site. Residues 2-220 (CGIVGAIRAH…DGDIALLASD (219 aa)) form the Glutamine amidotransferase type-2 domain. SIS domains are found at residues 288–428 (AKSV…VRGL) and 461–602 (WAQQ…VDKP). Residue lysine 607 is the For Fru-6P isomerization activity of the active site.

As to quaternary structure, homodimer.

The protein resides in the cytoplasm. It carries out the reaction D-fructose 6-phosphate + L-glutamine = D-glucosamine 6-phosphate + L-glutamate. Catalyzes the first step in hexosamine metabolism, converting fructose-6P into glucosamine-6P using glutamine as a nitrogen source. This is Glutamine--fructose-6-phosphate aminotransferase [isomerizing] from Neisseria meningitidis serogroup A / serotype 4A (strain DSM 15465 / Z2491).